A 301-amino-acid chain; its full sequence is Bifunctional dTDP-4-dehydrorhamnose 3,5-epimerase/dTDP-4-dehydrorhamnose reductase (301 aa).

NADPH is bound by residues 23–24 (WI), 69–71 (GVT), and Y111.

Belongs to the dTDP-4-dehydrorhamnose reductase family. Expressed in roots, leaves, stems and flowers.

It catalyses the reaction dTDP-4-dehydro-6-deoxy-alpha-D-glucose = dTDP-4-dehydro-beta-L-rhamnose. The catalysed reaction is dTDP-beta-L-rhamnose + NADP(+) = dTDP-4-dehydro-beta-L-rhamnose + NADPH + H(+). The protein operates within carbohydrate biosynthesis; dTDP-L-rhamnose biosynthesis. In terms of biological role, bifunctional enzyme involved in dTDP-beta-L-rhamnose biosynthesis. Catalyzes the epimerization of the C3' and C5'positions of dTDP-6-deoxy-4-keto-alpha-D-glucose to form dTDP-4-keto-beta-L-rhamnose and its reduction to yield dTDP-beta-L-rhamnose. Can form UDP-beta-L-rhamnose from UDP-6-deoxy-4-keto-alpha-D-glucose, but cannot convert GDP-4-dehydro-6-deoxy-D-mannose to GDP-fucose. This Arabidopsis thaliana (Mouse-ear cress) protein is Bifunctional dTDP-4-dehydrorhamnose 3,5-epimerase/dTDP-4-dehydrorhamnose reductase.